A 535-amino-acid chain; its full sequence is Putative beta-glucosidase 41 (535 aa).

The first 27 residues, 1–27 (MESLMRLVLVLFPFFVVFFVPLDHVSS), serve as a signal peptide directing secretion. Glutamine 49 is an a beta-D-glucoside binding site. The N-linked (GlcNAc...) asparagine glycan is linked to asparagine 118. Residues histidine 151 and 196 to 197 (NE) each bind a beta-D-glucoside. The active-site Proton donor is the glutamate 197. Residues cysteine 216 and cysteine 224 are joined by a disulfide bond. A beta-D-glucoside is bound by residues tyrosine 340 and glutamate 413. Residue glutamate 413 is the Nucleophile of the active site. Asparagine 445 carries an N-linked (GlcNAc...) asparagine glycan. A beta-D-glucoside contacts are provided by residues tryptophan 463, 470 to 471 (EW), and phenylalanine 479. Asparagine 489 carries N-linked (GlcNAc...) asparagine glycosylation.

The protein belongs to the glycosyl hydrolase 1 family.

It catalyses the reaction Hydrolysis of terminal, non-reducing beta-D-glucosyl residues with release of beta-D-glucose.. This Arabidopsis thaliana (Mouse-ear cress) protein is Putative beta-glucosidase 41.